The following is a 721-amino-acid chain: Solute carrier family 12 member 8 (721 aa).

11 consecutive transmembrane segments (helical) span residues 53–73, 84–104, 115–135, 136–156, 174–194, 196–216, 247–267, 283–303, 321–341, 374–394, and 397–417; these read FGTWDGVFTSCMINIFGVVLF, GVLLGIVLVSFVILVALVTVL, IGSGGVYSMVSTVLGGKVGGT, IGVLYIFGQCVAGAMYITGFA, ISLAVLVGLLGINLAGVKWII, LQLLLFLLLAVSTLDFVIGSF, FFTVFGVFFPAATGVMVGFNM, LAAIGTSWFLYVVFVFLLGAI, LVGGLFLLGLYISSLASCMGG, PVAAIFITGLLTMAFVFIGQV, and LAPIVTINFMLTYSAVDYSYF. Disordered stretches follow at residues 473–505 and 533–580; these read PNHTEAPESTSSQEKDPKMFKFSKPRKPAKQTL and NESQ…STVA. Over residues 553 to 565 the composition is skewed to acidic residues; the sequence is TESDEPDSEEDVD. The next 2 membrane-spanning stretches (helical) occupy residues 606 to 626 and 628 to 648; these read FLGAILSIVIMFVIQWIYALV and LGVAIILYLYIGRVNPGLNPG.

It belongs to the SLC12A transporter family.

The protein resides in the membrane. Its function is as follows. Cation/chloride cotransporter. The polypeptide is Solute carrier family 12 member 8 (slc12a8) (Xenopus laevis (African clawed frog)).